The following is a 516-amino-acid chain: Exodeoxyribonuclease 7 large subunit (516 aa).

The protein belongs to the XseA family. Heterooligomer composed of large and small subunits.

Its subcellular location is the cytoplasm. It catalyses the reaction Exonucleolytic cleavage in either 5'- to 3'- or 3'- to 5'-direction to yield nucleoside 5'-phosphates.. Its function is as follows. Bidirectionally degrades single-stranded DNA into large acid-insoluble oligonucleotides, which are then degraded further into small acid-soluble oligonucleotides. This is Exodeoxyribonuclease 7 large subunit from Chlamydia trachomatis serovar A (strain ATCC VR-571B / DSM 19440 / HAR-13).